The chain runs to 758 residues: Polyribonucleotide nucleotidyltransferase (758 aa).

Residues aspartate 482 and aspartate 488 each coordinate Mg(2+). One can recognise a KH domain in the interval 549 to 608 (PRVLSFYIDKDKISAAIGTKGKNIRSVCERSNAKIEIGDDGKVSVFAISSTEAEAAKNMM). In terms of domain architecture, S1 motif spans 618–686 (GSIIDAKVVK…KGGCPKLSRR (69 aa)). Residues 707–758 (DGLNNRDNYYNNSFNKKPEDNYHSNRPTRPRSGFSNRSRPKFGNNDSSSGFY) form a disordered region. Positions 711-721 (NRDNYYNNSFN) are enriched in low complexity.

Belongs to the polyribonucleotide nucleotidyltransferase family. The cofactor is Mg(2+).

It localises to the cytoplasm. The catalysed reaction is RNA(n+1) + phosphate = RNA(n) + a ribonucleoside 5'-diphosphate. Involved in mRNA degradation. Catalyzes the phosphorolysis of single-stranded polyribonucleotides processively in the 3'- to 5'-direction. The chain is Polyribonucleotide nucleotidyltransferase from Wolbachia pipientis subsp. Culex pipiens (strain wPip).